A 134-amino-acid chain; its full sequence is Acyl carrier protein, chloroplastic (134 aa).

The transit peptide at 1-51 directs the protein to the chloroplast; sequence MATTFSASVSTLATSLATPTRISFQKPALVSRTNLSFNLRRSIPTRLSVSC. The region spanning 55 to 130 is the Carrier domain; that stretch reads PETIEKVSKI…EAAELIEELV (76 aa). Ser-90 carries the post-translational modification O-(pantetheine 4'-phosphoryl)serine.

The protein belongs to the acyl carrier protein (ACP) family. Post-translationally, 4'-phosphopantetheine is transferred from CoA to a specific serine of apo-ACP by acpS. This modification is essential for activity because fatty acids are bound in thioester linkage to the sulfhydryl of the prosthetic group. As to expression, seed.

It is found in the plastid. The protein localises to the chloroplast. It functions in the pathway lipid metabolism; fatty acid biosynthesis. Its function is as follows. Carrier of the growing fatty acid chain in fatty acid biosynthesis. The protein is Acyl carrier protein, chloroplastic (ACL1.A3) of Brassica napus (Rape).